We begin with the raw amino-acid sequence, 203 residues long: Orotate phosphoribosyltransferase (203 aa).

5-phospho-alpha-D-ribose 1-diphosphate is bound by residues Arg-94, Lys-95, Lys-98, His-100, and 119-127; that span reads DDVATTGGS. Orotate-binding residues include Thr-123 and Arg-151.

This sequence belongs to the purine/pyrimidine phosphoribosyltransferase family. PyrE subfamily. Homodimer. The cofactor is Mg(2+).

The enzyme catalyses orotidine 5'-phosphate + diphosphate = orotate + 5-phospho-alpha-D-ribose 1-diphosphate. The protein operates within pyrimidine metabolism; UMP biosynthesis via de novo pathway; UMP from orotate: step 1/2. Functionally, catalyzes the transfer of a ribosyl phosphate group from 5-phosphoribose 1-diphosphate to orotate, leading to the formation of orotidine monophosphate (OMP). This chain is Orotate phosphoribosyltransferase, found in Staphylothermus marinus (strain ATCC 43588 / DSM 3639 / JCM 9404 / F1).